A 282-amino-acid polypeptide reads, in one-letter code: MPDRYAVMGNPIAHSKSPQIHTAFAQQTGQALTYTGLQVEAGKLAEAITAFQQQEGKGLNITIPLKAEAWRLVDQCSPQAQRAKAVNTILLEKNGALLGDNTDGVGLVRDLINNHGGRITGQQVLLLGAGGAASGVIEALLKEHPSHLIIVNRTPAKAIELAARFSPFGAITGGGYELLENNSFHLIINATASSLQGELPPLPRGILRSGGWVYDMMYGNEPTIFMKWGQTHGAARSLDGLGMLVEQAAEAFFIWRKVRPKSAPIIAQLRREMDIKNPAMPL.

Residues 15–17 (SKS) and threonine 62 contribute to the shikimate site. The active-site Proton acceptor is the lysine 66. Residues asparagine 87 and aspartate 103 each coordinate shikimate. Residues 128-132 (GAGGA), 152-157 (NRTPAK), and methionine 216 each bind NADP(+). Residue tyrosine 218 coordinates shikimate. Residue glycine 240 coordinates NADP(+).

The protein belongs to the shikimate dehydrogenase family. In terms of assembly, homodimer.

The catalysed reaction is shikimate + NADP(+) = 3-dehydroshikimate + NADPH + H(+). It participates in metabolic intermediate biosynthesis; chorismate biosynthesis; chorismate from D-erythrose 4-phosphate and phosphoenolpyruvate: step 4/7. Functionally, involved in the biosynthesis of the chorismate, which leads to the biosynthesis of aromatic amino acids. Catalyzes the reversible NADPH linked reduction of 3-dehydroshikimate (DHSA) to yield shikimate (SA). The protein is Shikimate dehydrogenase (NADP(+)) of Nitrosococcus oceani (strain ATCC 19707 / BCRC 17464 / JCM 30415 / NCIMB 11848 / C-107).